We begin with the raw amino-acid sequence, 252 residues long: Phosphate import ATP-binding protein PstB 1 (252 aa).

Residues 6-247 (LQIRDLSVYY…PKRKETEDYI (242 aa)) enclose the ABC transporter domain. An ATP-binding site is contributed by 38–45 (GPSGSGKS).

It belongs to the ABC transporter superfamily. Phosphate importer (TC 3.A.1.7) family. As to quaternary structure, the complex is composed of two ATP-binding proteins (PstB), two transmembrane proteins (PstC and PstA) and a solute-binding protein (PstS).

The protein resides in the cell membrane. The catalysed reaction is phosphate(out) + ATP + H2O = ADP + 2 phosphate(in) + H(+). Its function is as follows. Part of the ABC transporter complex PstSACB involved in phosphate import. Responsible for energy coupling to the transport system. This Streptococcus pyogenes serotype M1 protein is Phosphate import ATP-binding protein PstB 1.